The chain runs to 205 residues: Small ribosomal subunit protein uS4 (205 aa).

The interval 18–46 is disordered; it reads NIWGRPKSPVNSRAYGPGQHGQRRKSKVS. One can recognise an S4 RNA-binding domain in the interval 94-155; that stretch reads SRLDAVVYRA…RSRNMALVLE (62 aa).

This sequence belongs to the universal ribosomal protein uS4 family. In terms of assembly, part of the 30S ribosomal subunit. Contacts protein S5. The interaction surface between S4 and S5 is involved in control of translational fidelity.

Functionally, one of the primary rRNA binding proteins, it binds directly to 16S rRNA where it nucleates assembly of the body of the 30S subunit. Its function is as follows. With S5 and S12 plays an important role in translational accuracy. This is Small ribosomal subunit protein uS4 from Phenylobacterium zucineum (strain HLK1).